The sequence spans 277 residues: Short chain dehydrogenase penD (277 aa).

Residues I28, D76, and N105 each coordinate NADP(+). Residues S158 and S159 each act as proton donor in the active site. Residues Y173, K177, and T209 each coordinate NADP(+). The Proton acceptor role is filled by Y173. The Lowers pKa of active site Tyr role is filled by K177.

Belongs to the short-chain dehydrogenases/reductases (SDR) family.

The enzyme catalyses yaequinolone D + NADPH + H(+) = penigequinolone A + NADP(+) + H2O. It catalyses the reaction yaequinolone D + NADPH + H(+) = penigequinolone B + NADP(+) + H2O. It functions in the pathway secondary metabolite biosynthesis. The protein operates within alkaloid biosynthesis. It participates in mycotoxin biosynthesis. Functionally, short chain dehydrogenase; part of the gene cluster that mediates the biosynthesis of penigequinolones, potent insecticidal alkaloids that contain a highly modified 10-carbon prenyl group. The first stage is catalyzed by the nonribosomal peptide synthetase penN that condenses anthranilic acid and O-methyl-L-tyrosine to produce 4'-methoxycyclopeptin. 4'-methoxycyclopeptin is then converted to 4'-methoxydehydrocyclopeptin by the ketoglutarate-dependent dioxygenase penM through dehydrogenation to form a double bond between C-alpha and C-beta of the O-methyltyrosine side chain. PenM also converts its first product methoxydehydrocyclopeptin to 4'-methoxycyclopenin. The following conversion of 4'methoxycyclopenin into 4'-methoxyviridicatin is catalyzed by the cyclopenase penL. 4'-methoxyviridicatin is the precursor of quinolone natural products, and is further converted to quinolinone B. The prenyltransferase penI then catalyzes the canonical Friedel-Crafts alkylation of quinolinone B with dimethylallyl cation to yield dimethylallyl quinolone, which is subjected to FAD-dependent dehydrogenation by the FAD-linked oxidoreductase penH to yield conjugated aryl diene. The delta(3') double bond then serves as the site of the second alkylation with DMAPP catalyzed by the prenyltransferase penG to yield a carbenium ion intermediate, which can be attacked by H(2)O to yield a styrenyl quinolone containing a C3'-hydroxyprenyl chain, or undergo cyclization to yield yaequinolones J1 and J2. The conversion of the styrenyl quinolone into the tetrahydrofuran-containing yaequinolone C is performed by the FAD-dependent monooxygenase penE and involves epoxidation of the terminal C7'-C8' olefin, followed by epoxide ring opening initiated by the C3' hydroxyl group. The predicted cysteine hydrolase penJ acts as an epoxide hydrolase that enhances the rate of the 5-exo-tet cyclization step, increasing the yield of yaequinolone C. PenF catalyzes the cationic rearrangement of the epoxide formed by penE (before ring opening to produce yaequinolone C) into yaequinolone D. Finally, the short-chain dehydrogenase/reductase (SDR)-like reductase penD, catalyzes both the dehydration of yaequinolone D and the reduction of the resulting oxonium to yield penigequinolone. The sequence is that of Short chain dehydrogenase penD from Penicillium thymicola.